Consider the following 59-residue polypeptide: Large ribosomal subunit protein uL30 (59 aa).

It belongs to the universal ribosomal protein uL30 family. As to quaternary structure, part of the 50S ribosomal subunit.

The polypeptide is Large ribosomal subunit protein uL30 (Staphylococcus saprophyticus subsp. saprophyticus (strain ATCC 15305 / DSM 20229 / NCIMB 8711 / NCTC 7292 / S-41)).